The following is an 858-amino-acid chain: Leucine--tRNA ligase (858 aa).

Positions 42–52 (PYPSGRLHMGH) match the 'HIGH' region motif. The 'KMSKS' region motif lies at 618–622 (KMSKS). K621 contributes to the ATP binding site.

The protein belongs to the class-I aminoacyl-tRNA synthetase family.

The protein resides in the cytoplasm. The catalysed reaction is tRNA(Leu) + L-leucine + ATP = L-leucyl-tRNA(Leu) + AMP + diphosphate. In Aliivibrio fischeri (strain MJ11) (Vibrio fischeri), this protein is Leucine--tRNA ligase.